Here is a 430-residue protein sequence, read N- to C-terminus: MRYNGLNNMFFPLCLINDNHSVTSPSHTKKTKSDNYSKHHKNTLIDNKALSLFKMDDHEKVIGLIQKMKRIYDSLPSGKITKETDRKIHKYFIDIASHANNKCDDRITRRVYLNKDKEVSIKVVYFINNVTVHNNTIEIPQTVNGGYDFSHLSLKGIVIKDEDLSNSNFAGCRLQNAIFQDCNMYKTNFNFAIMEKILFDNCILDDSNFAQIKMTDGTLNSCSAMHVQFYNATMNRANIKNTFLDYSNFYMAYMAEVNLYKVIAPYINLFRADLSFSKLDLINFEHADLSRVNLNKATLQNINLIDSKLFFTRLTNTFLEMVICTDSNMANVNFNNANLSNCHFNCSVLTKAWMFNIRLYRVNFDEASVQGMGITILRGEENISINSDILVTLQKFFEEDCATHTGMSQTEDNLHAVAMKITADIMQDAD.

This is an uncharacterized protein from Escherichia coli (strain K12).